The sequence spans 1319 residues: Protein Jumonji (1319 aa).

Residues 1-11 (MSKERPKRNII) show a composition bias toward basic residues. Disordered stretches follow at residues 1 to 23 (MSKE…GMPW), 50 to 130 (DGID…PSLP), 173 to 265 (DEED…NTNG), 351 to 382 (YSNN…QSIN), 396 to 478 (HKMT…KALN), 499 to 537 (PIQK…PKRA), and 549 to 599 (QQRA…RSRA). Residues 61–70 (ASLSNGQLNG) show a composition bias toward polar residues. Residues 74 to 88 (GHKEDGSRSQRKDGG) show a composition bias toward basic and acidic residues. Residues 96 to 102 (PAKKRPR) carry the Nuclear localization signal motif. Over residues 98–107 (KKRPRLHAQR) the composition is skewed to basic residues. Residues 109 to 121 (FAQSQPNSPSNTP) are compositionally biased toward polar residues. Over residues 173–185 (DEEDLEDEDEIEE) the composition is skewed to acidic residues. Over residues 191–200 (VASTSCQSTP) the composition is skewed to polar residues. Over residues 221 to 251 (KDKELTPRSKARESSVGRDRSERCDESEISH) the composition is skewed to basic and acidic residues. A compositionally biased stretch (polar residues) spans 372 to 382 (LSHSGKAQSIN). Basic and acidic residues predominate over residues 413-424 (SAREEEVVDRPV). The segment covering 505-515 (PAPPPSPPAAP) has biased composition (pro residues). 2 stretches are compositionally biased toward low complexity: residues 516–525 (ASPSMPQNPA) and 554–570 (TNPT…ASKS). The span at 583-598 (RLDRDRERERERERSR) shows a compositional bias: basic and acidic residues. The 42-residue stretch at 607–648 (VPIFKPSSREFQDPLVYLDSFREQVESCGLCRVLPPTDWRPE) folds into the JmjN domain. An ARID domain is found at 671–779 (WGPNVQKLAC…FLLSYDLLSP (109 aa)). The span at 798–811 (RKRGPLEGHSDNGH) shows a compositional bias: basic and acidic residues. The disordered stretch occupies residues 798–818 (RKRGPLEGHSDNGHHSLALPR). Positions 944 to 948 (GSGFP) match the GSGFP motif motif. Residues 954-1118 (PFSKHGWNLT…LGYEAAKDLK (165 aa)) enclose the JmjC domain.

It belongs to the JARID2 family. As to quaternary structure, associates with the PRC2 complex.

The protein localises to the nucleus. Regulator of histone methyltransferase complexes that plays an essential role in embryonic development. Acts by modulating histone methyltransferase activity and promoting the recruitment of histone methyltransferase complexes to their target genes. Binds DNA and mediates the recruitment of the PRC2 complex to target genes in embryonic stem cells. Does not have histone demethylase activity but regulates activity of various histone methyltransferase complexes. In embryonic stem cells, it associates with the PRC2 complex and inhibits trimethylation of 'Lys-27' of histone H3 (H3K27me3) by the PRC2 complex, thereby playing a key role in differentiation of embryonic stem cells and normal development. This chain is Protein Jumonji (jarid2b), found in Danio rerio (Zebrafish).